The sequence spans 638 residues: Trichohyalin-like protein 1 (638 aa).

Residues 49–84 form the EF-hand domain; it reads HVFHAVERKLNLLNFDRDGTISFEEFVLAIFSLLNP. The disordered stretch occupies residues 134–638; it reads SEMASSGQPS…ALEAESLEAQ (505 aa). Positions 166–179 are enriched in polar residues; that stretch reads LPRNVSEPNDPENQ. Composition is skewed to basic and acidic residues over residues 221–246, 294–309, and 318–328; these read IPRE…QRPT, DDTK…KDAG, and EEPKADAKVAE. A compositionally biased stretch (polar residues) spans 343–357; that stretch reads DQSVQSRSRNVSETS. 6 stretches are compositionally biased toward basic and acidic residues: residues 358–372, 395–409, 419–435, 479–490, 526–548, and 622–631; these read SRGE…HERI, REND…KDPS, EIKE…HSEE, RIQDKPVRKEDH, AEPH…KQES, and AGRENRKALE.

It belongs to the S-100 family.

The polypeptide is Trichohyalin-like protein 1 (Tchhl1) (Mus musculus (Mouse)).